Here is a 677-residue protein sequence, read N- to C-terminus: MSKQNKLTKVLDNDLDDIDIEEDDSTNRKFESMSEDEETPGMCCECTDQPAEVVCLQCQDELCTVCSTSLHRRGSRRSHIFKNKHGQELDYDELNKRDRQPPLHGKEDEKVQNNNNNNNNTNNTNNIEMDDNKSINNNNNNINSINSMYRGTSNLLNPLPFHHTNQQRNGGGSNNHQINNHHKDEDEEIDEDEEKFIHKNENFTDFIPRLSKDWFTERSKYIPIRLNIRERNDLRLLEAALHVSEYTDKIDIIHVGGSKSKRINDQLRGMCAILSGLLVASDFKKGQQLVENKDFFENEEFFQNVFEIGRRHKIMNPAKMRTEYGKMIHLLQDAADEDVKKNLSGLNMIKPLKTVFLFLDERNGLKLLEDPLLELATREVLAENKTRPQIQREIREKEHAIKTLSRRYSSSMLKSEEIEVCIYSICDNHTFLRENRDPVKKMKHLLKEYFSPNQSERGFSLALEHGIGGARLSHNHRKQYNYVYQSLSLWQHILHDMFKLWYFAEIDLLCGHRYQLSNTGQGLNRIQQCPNVGKIMHSILRQTQKKVGDDWVGSSVIHLGDHNVPNSLVFIDKYTQISRILSPIVLTIEYIPKITDPNLVAYIKNTFGGPQTLTKIILCDFFKHAFDGSGADNFFDAGSCIDGRLTSAWQWSAQIAKKPYYPIFLLSGFSGFDGSFN.

A B box-type; atypical zinc finger spans residues Glu38 to Lys84. Residues Cys43, Cys46, Cys66, and His71 each contribute to the Zn(2+) site. Positions Tyr91–Val111 are enriched in basic and acidic residues. 2 disordered regions span residues Tyr91–Ile142 and Leu156–Asp192. The segment covering Asn113–Asn126 has biased composition (low complexity). Polar residues predominate over residues His163–Ile178.

It belongs to the UPF0652 family.

The protein is UPF0652 protein of Dictyostelium discoideum (Social amoeba).